Reading from the N-terminus, the 333-residue chain is Gamma-D-glutamyl-L-lysine dipeptidyl-peptidase (333 aa).

A signal peptide spans 1–23 (MKKVGTAFLTTLFIFSSFTSAHA). Residues Glu-83, Tyr-118, 237-239 (DCS), and 256-257 (DS) each bind substrate. The NlpC/P60 domain occupies 208–332 (TPAADDLINT…EEYAGARRYL (125 aa)). The active-site Nucleophile is the Cys-238. The active-site Proton acceptor is His-291. His-303 is an active-site residue.

The protein belongs to the peptidase C40 family. Monomer in solution.

The catalysed reaction is The enzyme releases L-Ala-gamma-D-Glu dipeptides from cell wall peptides via cleavage of an L-Ala-gamma-D-Glu-|-L-Lys bond.. It functions in the pathway cell wall degradation; peptidoglycan degradation. Specifically hydrolyzes gamma-D-glutamyl-L-lysine bonds in murein peptides, releasing L-Ala-D-Glu. The polypeptide is Gamma-D-glutamyl-L-lysine dipeptidyl-peptidase (Bacillus cereus (strain ATCC 10987 / NRS 248)).